Consider the following 842-residue polypeptide: Protein P (842 aa).

The terminal protein domain (TP) stretch occupies residues 1 to 177 (MPLSYQHFRR…FCGSPYTWEQ (177 aa)). Residues 178 to 345 (DLQHGAFLDG…YCLSHLVNLL (168 aa)) are spacer. The disordered stretch occupies residues 184-238 (FLDGPSRVGKEPFHQQSSRIPSRSPVGPSIQSKYQQSRLGLQSQKGPLARGQQGR). Positions 212–228 (SIQSKYQQSRLGLQSQK) are enriched in polar residues. Positions 346–689 (QDWGPCTEHG…YMNLYPVARQ (344 aa)) are polymerase/reverse transcriptase domain (RT). One can recognise a Reverse transcriptase domain in the interval 356–599 (EYHIRIPRTP…YSLNFMGYVI (244 aa)). Mg(2+) contacts are provided by D428, D550, and D551.

This sequence belongs to the hepadnaviridae P protein family.

It carries out the reaction DNA(n) + a 2'-deoxyribonucleoside 5'-triphosphate = DNA(n+1) + diphosphate. It catalyses the reaction Endonucleolytic cleavage to 5'-phosphomonoester.. Activated by host HSP70 and HSP40 in vitro to be able to bind the epsilon loop of the pgRNA. Because deletion of the RNase H region renders the protein partly chaperone-independent, the chaperones may be needed indirectly to relieve occlusion of the RNA-binding site by this domain. Inhibited by several reverse-transcriptase inhibitors: Lamivudine, Adefovir and Entecavir. In terms of biological role, multifunctional enzyme that converts the viral RNA genome into dsDNA in viral cytoplasmic capsids. This enzyme displays a DNA polymerase activity that can copy either DNA or RNA templates, and a ribonuclease H (RNase H) activity that cleaves the RNA strand of RNA-DNA heteroduplexes in a partially processive 3'- to 5'-endonucleasic mode. Neo-synthesized pregenomic RNA (pgRNA) are encapsidated together with the P protein, and reverse-transcribed inside the nucleocapsid. Initiation of reverse-transcription occurs first by binding the epsilon loop on the pgRNA genome, and is initiated by protein priming, thereby the 5'-end of (-)DNA is covalently linked to P protein. Partial (+)DNA is synthesized from the (-)DNA template and generates the relaxed circular DNA (RC-DNA) genome. After budding and infection, the RC-DNA migrates in the nucleus, and is converted into a plasmid-like covalently closed circular DNA (cccDNA). The activity of P protein does not seem to be necessary for cccDNA generation, and is presumably released from (+)DNA by host nuclear DNA repair machinery. This Hepatitis B virus genotype G (isolate United States/USG17/2002) (HBV-G) protein is Protein P.